Consider the following 398-residue polypeptide: Glia-derived nexin (398 aa).

A signal peptide spans M1 to C19. N118 and N159 each carry an N-linked (GlcNAc...) asparagine glycan.

This sequence belongs to the serpin family.

It localises to the secreted. The protein localises to the extracellular space. Its function is as follows. Serine protease inhibitor with activity toward thrombin, trypsin, and urokinase. Promotes neurite extension by inhibiting thrombin. Binds heparin. The protein is Glia-derived nexin (SERPINE2) of Homo sapiens (Human).